Consider the following 267-residue polypeptide: Glucosamine-6-phosphate deaminase (267 aa).

The active-site Proton acceptor; for enolization step is D72. The For ring-opening step role is filled by D141. The Proton acceptor; for ring-opening step role is filled by H143. E148 serves as the catalytic For ring-opening step.

This sequence belongs to the glucosamine/galactosamine-6-phosphate isomerase family. NagB subfamily. Homohexamer.

The catalysed reaction is alpha-D-glucosamine 6-phosphate + H2O = beta-D-fructose 6-phosphate + NH4(+). The protein operates within amino-sugar metabolism; N-acetylneuraminate degradation; D-fructose 6-phosphate from N-acetylneuraminate: step 5/5. Allosterically activated by N-acetylglucosamine 6-phosphate (GlcNAc6P). Functionally, catalyzes the reversible isomerization-deamination of glucosamine 6-phosphate (GlcN6P) to form fructose 6-phosphate (Fru6P) and ammonium ion. This chain is Glucosamine-6-phosphate deaminase, found in Mannheimia succiniciproducens (strain KCTC 0769BP / MBEL55E).